A 234-amino-acid polypeptide reads, in one-letter code: Large ribosomal subunit protein uL1 (234 aa).

The protein belongs to the universal ribosomal protein uL1 family. As to quaternary structure, part of the 50S ribosomal subunit.

Binds directly to 23S rRNA. The L1 stalk is quite mobile in the ribosome, and is involved in E site tRNA release. In terms of biological role, protein L1 is also a translational repressor protein, it controls the translation of the L11 operon by binding to its mRNA. The polypeptide is Large ribosomal subunit protein uL1 (Campylobacter fetus subsp. fetus (strain 82-40)).